Here is a 264-residue protein sequence, read N- to C-terminus: Zinc transporter ZupT (264 aa).

5 helical membrane passes run 8 to 28, 36 to 56, 75 to 95, 121 to 141, and 148 to 168; these read AFIL…IAFV, FLSV…MIEI, WLTV…DKLI, GLMT…ATFI, and SIAI…GIAV. Residues Asn132 and Glu135 each contribute to the Fe(2+) site. Positions 135 and 160 each coordinate Zn(2+). Residues Asn161, Glu164, and Glu193 each coordinate Fe(2+). Zn(2+) is bound at residue Glu164. A run of 3 helical transmembrane segments spans residues 197–217, 219–239, and 244–264; these read AIIG…GAIF, AVAG…AEEY, and LAIY…LLFI.

It belongs to the ZIP transporter (TC 2.A.5) family. ZupT subfamily.

Its subcellular location is the cell membrane. The enzyme catalyses Zn(2+)(in) = Zn(2+)(out). In terms of biological role, mediates zinc uptake. May also transport other divalent cations. The polypeptide is Zinc transporter ZupT (Streptococcus mutans serotype c (strain ATCC 700610 / UA159)).